The following is a 66-amino-acid chain: Beta-mammal toxin Cv2 (66 aa).

The region spanning 1–66 (KEGYIVNHST…VWPLPKKTCN (66 aa)) is the LCN-type CS-alpha/beta domain. 4 cysteine pairs are disulfide-bonded: Cys12–Cys65, Cys16–Cys41, Cys25–Cys46, and Cys29–Cys48.

Expressed by the venom gland.

It localises to the secreted. Its activity is regulated as follows. Is susceptible to be slightly neutralized by human antibodies scFvs 10FG2. Beta toxins bind voltage-independently at site-4 of sodium channels (Nav) and reduces peak current and shifts the voltage of activation toward more negative potentials thereby affecting sodium channel activation and promoting spontaneous and repetitive firing. This toxin is slightly toxic to mice. This Centruroides villegasi (Scorpion) protein is Beta-mammal toxin Cv2.